The primary structure comprises 625 residues: Probable potassium transport system protein Kup 2 (625 aa).

12 helical membrane-spanning segments follow: residues 15 to 35 (LSFA…LYAF), 52 to 72 (ILSL…LVIV), 98 to 118 (GGWL…DGML), 134 to 154 (LSPN…FFLF), 164 to 184 (IGVY…ILGF), 212 to 232 (LALF…ALFA), 246 to 266 (WFAV…ALVL), 284 to 304 (FLPV…QAII), 336 to 356 (VYLP…VVIF), 365 to 385 (AYGI…GIIA), 394 to 414 (FKIL…AGNI), and 417 to 437 (LLTG…VMYT).

It belongs to the HAK/KUP transporter (TC 2.A.72) family.

The protein resides in the cell inner membrane. The catalysed reaction is K(+)(in) + H(+)(in) = K(+)(out) + H(+)(out). Transport of potassium into the cell. Likely operates as a K(+):H(+) symporter. This chain is Probable potassium transport system protein Kup 2, found in Legionella pneumophila (strain Corby).